We begin with the raw amino-acid sequence, 120 residues long: Large ribosomal subunit protein eL18 (120 aa).

It belongs to the eukaryotic ribosomal protein eL18 family.

This chain is Large ribosomal subunit protein eL18, found in Thermococcus onnurineus (strain NA1).